The sequence spans 205 residues: Large ribosomal subunit protein uL4 (205 aa).

The tract at residues 45–97 is disordered; sequence RQGTSAVKNRSAVRGGGKKPWRQKGTGRARQGSIRAPQWRGGGTVFGPTPRSY. The span at 60–71 shows a compositional bias: basic residues; that stretch reads GGKKPWRQKGTG.

Belongs to the universal ribosomal protein uL4 family. In terms of assembly, part of the 50S ribosomal subunit.

In terms of biological role, one of the primary rRNA binding proteins, this protein initially binds near the 5'-end of the 23S rRNA. It is important during the early stages of 50S assembly. It makes multiple contacts with different domains of the 23S rRNA in the assembled 50S subunit and ribosome. Forms part of the polypeptide exit tunnel. This Lactobacillus johnsonii (strain CNCM I-12250 / La1 / NCC 533) protein is Large ribosomal subunit protein uL4.